The chain runs to 557 residues: Cytochrome P450 monooxygenase FSL4 (557 aa).

A run of 2 helical transmembrane segments spans residues 6 to 26 (LWLVTVTATLSLFVWQLIFLL) and 32 to 52 (IVVCLIAESLFFVAWFFYWTV). N-linked (GlcNAc...) asparagine glycosylation is found at N127 and N393. C494 is a binding site for heme.

The protein belongs to the cytochrome P450 family. Heme serves as cofactor.

The protein resides in the membrane. It functions in the pathway secondary metabolite biosynthesis. Its function is as follows. Cytochrome P450 monooxygenase; part of the gene cluster that mediates the biosynthesis of fusarielins F, G and H, decaketide compounds with 5 methylations and a decaline core that act as mycoestrogens as they stimulate growth of MCF-7 breast cancer cells. The initial compound in the pathway is produced by the reducing polyketide synthase FSL1. FSL1 lacks an active enoyl reductase (ER) domain and biosynthesis of fusarielins relies on the trans-acting enoyl reductase FSL5, before it is released through hydrolysis catalyzed by the thioesterase FSL2. Fusarielins F, G, and H have a C11=C12 cis double bond and is fully reduced between C10 and C11 and between C12 and C13. FSL3 can be involved in the formation of the C11=C12 cis double bond by moving a hypothetical C10=C11 or C12=C13 trans double bond to form prefusarielin. Prefusarielin is oxygenated at C15 and C16 by FSL4, resulting in fusarielin F, which subsequently is epoxidized into fusarielin G by the same enzyme. The final step in the pathway is a reduction of the carboxylic acid moiety to yield fusarielin H via a still undetermined mechanism. This Gibberella zeae (strain ATCC MYA-4620 / CBS 123657 / FGSC 9075 / NRRL 31084 / PH-1) (Wheat head blight fungus) protein is Cytochrome P450 monooxygenase FSL4.